We begin with the raw amino-acid sequence, 473 residues long: GTPase Der (473 aa).

EngA-type G domains lie at Pro5–Val170 and Leu178–Met351. Residues Gly11–Ser18, Asp58–Ile62, Asn123–Asp126, Gly184–Ser191, Asp231–Val235, and Asn296–Asp299 contribute to the GTP site. The KH-like domain occupies Phe352–Thr436. The segment at Pro438–Lys473 is disordered. Positions Gln459–Lys473 are enriched in basic residues.

The protein belongs to the TRAFAC class TrmE-Era-EngA-EngB-Septin-like GTPase superfamily. EngA (Der) GTPase family. In terms of assembly, associates with the 50S ribosomal subunit.

In terms of biological role, GTPase that plays an essential role in the late steps of ribosome biogenesis. The protein is GTPase Der of Psychrobacter sp. (strain PRwf-1).